A 485-amino-acid chain; its full sequence is MDFTNYKAHELKNLISKKEASVEEVTKAHLENVKNIDEKVNAFLYIAEEEALNDAKALDEKLSKGEDIGLLGGAPLGIKDNISVKNMQNTCASKILEGYISPYDATVSESVKSQGGVILGKLNMDEFAMGSSTENSAYKITRNPWDLDRVPGGSSGGSAAAVASKEVPLALGTDTGGSVRQPASFCGIVGLKPTYGRVSRSGVVAYGSTLDQVGTLGRDVKDCALLTQVISGVDHRDFTTANINVPNYENSLSENIKGKKIALPKEFFKDGLDPKVQKAIYDALEVFKANGAEITEVSLPLADYAISAYYLLACAEASSNLARFDGVRYGHRSESVEDAVDVYFKSRSEAFGKEVKKRIMLGTYALSAGYYDAYYKKALKVRNLIKGEFENIFKDFDAIISPTAPTPAYKIGEKTENALEMYLGDIYTVPVNIAGIPAISLPCGVADGLPVGLQIMGNYFKEDTLFNLAYSYEQSTKWHEMHPNL.

Active-site charge relay system residues include K79 and S154. S178 acts as the Acyl-ester intermediate in catalysis.

It belongs to the amidase family. GatA subfamily. Heterotrimer of A, B and C subunits.

It catalyses the reaction L-glutamyl-tRNA(Gln) + L-glutamine + ATP + H2O = L-glutaminyl-tRNA(Gln) + L-glutamate + ADP + phosphate + H(+). In terms of biological role, allows the formation of correctly charged Gln-tRNA(Gln) through the transamidation of misacylated Glu-tRNA(Gln) in organisms which lack glutaminyl-tRNA synthetase. The reaction takes place in the presence of glutamine and ATP through an activated gamma-phospho-Glu-tRNA(Gln). This is Glutamyl-tRNA(Gln) amidotransferase subunit A from Clostridium botulinum (strain Eklund 17B / Type B).